The following is a 335-amino-acid chain: DNA polymerase beta (335 aa).

Lys41 is covalently cross-linked (Glycyl lysine isopeptide (Lys-Gly) (interchain with G-Cter in ubiquitin)). Lys60 lines the K(+) pocket. Lys60 contributes to the Na(+) binding site. Residue Lys61 forms a Glycyl lysine isopeptide (Lys-Gly) (interchain with G-Cter in ubiquitin) linkage. Leu62 and Val65 together coordinate K(+). Na(+) contacts are provided by Leu62 and Val65. Lys72 acts as the Nucleophile; Schiff-base intermediate with DNA; for 5'-dRP lyase activity in catalysis. Lys72 carries the post-translational modification N6-acetyllysine. A Glycyl lysine isopeptide (Lys-Gly) (interchain with G-Cter in ubiquitin) cross-link involves residue Lys81. The residue at position 83 (Arg83) is an Omega-N-methylarginine; by PRMT6. Residues Thr101, Val103, and Ile106 each contribute to the K(+) site. Na(+) contacts are provided by Thr101, Val103, and Ile106. Arg149 provides a ligand contact to a 2'-deoxyribonucleoside 5'-triphosphate. Position 152 is an omega-N-methylarginine; by PRMT6 (Arg152). Residues Ser180, Arg183, Gly189, and Asp190 each contribute to the a 2'-deoxyribonucleoside 5'-triphosphate site. Positions Arg183–Asp192 are DNA-binding. Mg(2+) is bound by residues Asp190, Asp192, and Asp256.

It belongs to the DNA polymerase type-X family. In terms of assembly, monomer. Binds single-stranded DNA (ssDNA). Interacts with APEX1, LIG1, LIG3, FEN1, PCNA and XRCC1. Interacts with HUWE1/ARF-BP1, STUB1/CHIP and USP47. Interacts with FAM168A. It depends on Mg(2+) as a cofactor. Post-translationally, methylation by PRMT6 stimulates the polymerase activity by enhancing DNA binding and processivity. Ubiquitinated at Lys-41, Lys-61 and Lys-81: monoubiquitinated by HUWE1/ARF-BP1. Monoubiquitinated protein is then the target of STUB1/CHIP, which catalyzes polyubiquitination from monoubiquitin, leading to degradation by the proteasome. USP47 mediates the deubiquitination of monoubiquitinated protein, preventing polyubiquitination by STUB1/CHIP and its subsequent degradation.

It is found in the nucleus. The protein localises to the cytoplasm. It catalyses the reaction DNA(n) + a 2'-deoxyribonucleoside 5'-triphosphate = DNA(n+1) + diphosphate. The catalysed reaction is a 5'-end 2'-deoxyribose-2'-deoxyribonucleotide-DNA = (2E,4S)-4-hydroxypenten-2-al-5-phosphate + a 5'-end 5'-phospho-2'-deoxyribonucleoside-DNA + H(+). It carries out the reaction 2'-deoxyribonucleotide-(2'-deoxyribose 5'-phosphate)-2'-deoxyribonucleotide-DNA = a 3'-end 2'-deoxyribonucleotide-(2,3-dehydro-2,3-deoxyribose 5'-phosphate)-DNA + a 5'-end 5'-phospho-2'-deoxyribonucleoside-DNA + H(+). Functionally, repair polymerase that plays a key role in base-excision repair. During this process, the damaged base is excised by specific DNA glycosylases, the DNA backbone is nicked at the abasic site by an apurinic/apyrimidic (AP) endonuclease, and POLB removes 5'-deoxyribose-phosphate from the preincised AP site acting as a 5'-deoxyribose-phosphate lyase (5'-dRP lyase); through its DNA polymerase activity, it adds one nucleotide to the 3' end of the arising single-nucleotide gap. Conducts 'gap-filling' DNA synthesis in a stepwise distributive fashion rather than in a processive fashion as for other DNA polymerases. It is also able to cleave sugar-phosphate bonds 3' to an intact AP site, acting as an AP lyase. The polypeptide is DNA polymerase beta (POLB) (Bos taurus (Bovine)).